Here is a 254-residue protein sequence, read N- to C-terminus: Type III pantothenate kinase (254 aa).

7–14 serves as a coordination point for ATP; sequence DIGNTRLK. Substrate contacts are provided by residues Tyr-97 and 104–107; that span reads GSDR. The active-site Proton acceptor is the Asp-106. Thr-134 contacts ATP. Thr-184 provides a ligand contact to substrate.

This sequence belongs to the type III pantothenate kinase family. In terms of assembly, homodimer. NH4(+) is required as a cofactor. K(+) serves as cofactor.

It is found in the cytoplasm. It catalyses the reaction (R)-pantothenate + ATP = (R)-4'-phosphopantothenate + ADP + H(+). Its pathway is cofactor biosynthesis; coenzyme A biosynthesis; CoA from (R)-pantothenate: step 1/5. Functionally, catalyzes the phosphorylation of pantothenate (Pan), the first step in CoA biosynthesis. The polypeptide is Type III pantothenate kinase (Methylibium petroleiphilum (strain ATCC BAA-1232 / LMG 22953 / PM1)).